We begin with the raw amino-acid sequence, 63 residues long: Large ribosomal subunit protein eL37 (63 aa).

Zn(2+)-binding residues include Cys-20, Cys-23, Cys-35, and Cys-38. The C4-type zinc finger occupies 20-38 (CRRCGRRAFNVKKGYCAAC).

The protein belongs to the eukaryotic ribosomal protein eL37 family. As to quaternary structure, part of the 50S ribosomal subunit. Zn(2+) serves as cofactor.

Binds to the 23S rRNA. This is Large ribosomal subunit protein eL37 from Thermococcus kodakarensis (strain ATCC BAA-918 / JCM 12380 / KOD1) (Pyrococcus kodakaraensis (strain KOD1)).